A 156-amino-acid polypeptide reads, in one-letter code: Snaclec A3 (156 aa).

The signal sequence occupies residues 1-23; it reads MGRSISVSFGLLVVFLSLSGTGA. 3 disulfide bridges follow: cysteine 27–cysteine 38, cysteine 55–cysteine 154, and cysteine 129–cysteine 146. Residues 34–155 enclose the C-type lectin domain; sequence HEGHCYKVFN…CGQPYRFTCE (122 aa).

It belongs to the snaclec family. Heterodimer; disulfide-linked. As to expression, expressed by the venom gland.

It localises to the secreted. Functionally, interferes with one step of hemostasis (modulation of platelet aggregation, or coagulation cascade, for example). This is Snaclec A3 from Macrovipera lebetinus (Levantine viper).